We begin with the raw amino-acid sequence, 570 residues long: Proline--tRNA ligase (570 aa).

The protein belongs to the class-II aminoacyl-tRNA synthetase family. ProS type 1 subfamily. Homodimer.

It localises to the cytoplasm. It catalyses the reaction tRNA(Pro) + L-proline + ATP = L-prolyl-tRNA(Pro) + AMP + diphosphate. Its function is as follows. Catalyzes the attachment of proline to tRNA(Pro) in a two-step reaction: proline is first activated by ATP to form Pro-AMP and then transferred to the acceptor end of tRNA(Pro). As ProRS can inadvertently accommodate and process non-cognate amino acids such as alanine and cysteine, to avoid such errors it has two additional distinct editing activities against alanine. One activity is designated as 'pretransfer' editing and involves the tRNA(Pro)-independent hydrolysis of activated Ala-AMP. The other activity is designated 'posttransfer' editing and involves deacylation of mischarged Ala-tRNA(Pro). The misacylated Cys-tRNA(Pro) is not edited by ProRS. The sequence is that of Proline--tRNA ligase from Syntrophomonas wolfei subsp. wolfei (strain DSM 2245B / Goettingen).